A 329-amino-acid polypeptide reads, in one-letter code: Myoblast determination protein 1 homolog (329 aa).

Residues 160–211 (DRRKAATMRERRRLRKVNEAFEVVKQRTCPNPNQRLPKVEILRSAIDYINTL) form the bHLH domain. The interval 256–279 (NPDGPNVYDDEDLSDTDEDRDHHH) is disordered. The span at 263–273 (YDDEDLSDTDE) shows a compositional bias: acidic residues.

In terms of assembly, efficient DNA binding requires dimerization with another bHLH protein. In terms of tissue distribution, body wall muscle cells; in clonal muscle precursors, in a set of early embryonic blastomeres (the ms-granddaughters), and in six glial-like cells called GLRS.

Its subcellular location is the nucleus. Functionally, accumulation defines the body wall muscle cell fate during embryogenesis. This chain is Myoblast determination protein 1 homolog (hlh-1), found in Caenorhabditis briggsae.